Here is a 507-residue protein sequence, read N- to C-terminus: ATP synthase subunit alpha, mitochondrial (507 aa).

ATP is bound at residue 171-178 (GDRQTGKT).

The protein belongs to the ATPase alpha/beta chains family. As to quaternary structure, F-type ATPases have 2 components, CF(1) - the catalytic core - and CF(0) - the membrane proton channel. CF(1) has five subunits: alpha(3), beta(3), gamma(1), delta(1), epsilon(1). CF(0) has three main subunits: a, b and c.

Its subcellular location is the mitochondrion. It is found in the mitochondrion inner membrane. Mitochondrial membrane ATP synthase (F(1)F(0) ATP synthase or Complex V) produces ATP from ADP in the presence of a proton gradient across the membrane which is generated by electron transport complexes of the respiratory chain. F-type ATPases consist of two structural domains, F(1) - containing the extramembraneous catalytic core, and F(0) - containing the membrane proton channel, linked together by a central stalk and a peripheral stalk. During catalysis, ATP synthesis in the catalytic domain of F(1) is coupled via a rotary mechanism of the central stalk subunits to proton translocation. Subunits alpha and beta form the catalytic core in F(1). Rotation of the central stalk against the surrounding alpha(3)beta(3) subunits leads to hydrolysis of ATP in three separate catalytic sites on the beta subunits. Subunit alpha does not bear the catalytic high-affinity ATP-binding sites. In Pisum sativum (Garden pea), this protein is ATP synthase subunit alpha, mitochondrial (ATPA).